The primary structure comprises 399 residues: Brefeldin A resistance protein (399 aa).

Composition is skewed to basic and acidic residues over residues 1–31, 49–69, and 101–130; these read MTSKMENNKDESISTKNALEEKSNETKDETS, SKSEPLEDKGNAEVKEFKETT, and KVEEKELKVNKDVDENEGHVAVETGKKESA. Disordered regions lie at residues 1 to 173 and 191 to 269; these read MTSK…FGAF and KKFA…SEII. Positions 138 to 157 are enriched in low complexity; the sequence is SPFSQFASFSNASSPFSNVS. Basic and acidic residues-rich tracts occupy residues 205 to 217 and 241 to 252; these read SGKEKENDKKSSE and TKSEPKEADKGS. Polar residues predominate over residues 253 to 263; the sequence is GDSTKSTMHQL. One can recognise a RanBD1 domain in the interval 256–396; sequence TKSTMHQLSD…VLEAIPKGGR (141 aa).

In terms of processing, phosphorylated.

The protein resides in the nucleus. The protein is Brefeldin A resistance protein (hba1) of Schizosaccharomyces pombe (strain 972 / ATCC 24843) (Fission yeast).